We begin with the raw amino-acid sequence, 105 residues long: U2-lycotoxin-Ls1a (105 aa).

Residues 1–17 (MIKYVLISALLVVAVYS) form the signal peptide. Residues 18 to 41 (FTIEDNEDALLEEAEDELDTEEER) constitute a propeptide that is removed on maturation. Disulfide bonds link C51–C67, C58–C97, C60–C83, and C69–C81.

The protein belongs to the neurotoxin 04 (omega-agtx) family. 01 (type I omega-agtx) subfamily. In terms of tissue distribution, expressed by the venom gland.

The protein localises to the secreted. Insecticidal to house crickets. It induces an excitatory slow-onset impact that leads to irreversible spastic paralysis. It also modifies human voltage-gated potassium channel Kv1.5/KCNA5. Most likely, it binds to the voltage-sensing domain of the channel, suggesting it does not block the pore but prevents its opening at physiological membrane potentials. The recombinant peptide binds to the channel in an irreversible manner and slows down the hKv1.5 current activation kinetics. It is not toxic to mice, when intracranially injected (at 0.5 ug/g mouse). The sequence is that of U2-lycotoxin-Ls1a from Lycosa singoriensis (Wolf spider).